The sequence spans 347 residues: Isopentenyl-diphosphate delta-isomerase (347 aa).

A substrate-binding site is contributed by 11–12 (RK). FMN-binding positions include 72–74 (AMT), serine 102, and asparagine 131. Glutamine 161 is a substrate binding site. Glutamate 162 is a binding site for Mg(2+). FMN contacts are provided by residues lysine 192, threonine 222, and 287-288 (AG).

It belongs to the IPP isomerase type 2 family. In terms of assembly, homooctamer. Dimer of tetramers. It depends on FMN as a cofactor. The cofactor is NADPH. Mg(2+) serves as cofactor.

Its subcellular location is the cytoplasm. The catalysed reaction is isopentenyl diphosphate = dimethylallyl diphosphate. Functionally, involved in the biosynthesis of isoprenoids. Catalyzes the 1,3-allylic rearrangement of the homoallylic substrate isopentenyl (IPP) to its allylic isomer, dimethylallyl diphosphate (DMAPP). The chain is Isopentenyl-diphosphate delta-isomerase from Lactococcus lactis subsp. lactis (strain IL1403) (Streptococcus lactis).